Reading from the N-terminus, the 436-residue chain is Hydrolyase ccsE (436 aa).

Catalysis depends on Ser249, which acts as the Nucleophile.

This sequence belongs to the AB hydrolase superfamily. FUS2 hydrolase family. Homodimer.

The protein operates within mycotoxin biosynthesis. In terms of biological role, hydrolyase; part of the gene cluster that mediates the biosynthesis of a family of the mycotoxins cytochalasins E and K. The hybrid PKS-NRPS synthetase ccsA and the enoyl reductase ccsC are responsible for fusion of phenylalanine with an octaketide backbone and subsequent release of the stable tetramic acid precursor. The polyketide synthase module (PKS) of the PKS-NRPS ccsA is responsible for the synthesis of the octaketide backbone. The downstream nonribosomal peptide synthetase (NRPS) amidates the carboxyl end of the octaketide with a phenylalanine. A reductase-like domain (R) at the C-terminus catalyzes the reductive release of the polyketide-amino acid intermediate. Because ccsA lacks a designated enoylreductase (ER) domain, the required activity is provided the enoyl reductase ccsC. Upon formation of the 11-membered carbocycle-fused perhydroisoindolone intermediate, a number of oxidative steps are required to afford the final cytochalasin E and K, including two hydroxylations at C17 and C18, one alcohol oxidation at C17, one epoxidation at C6 and C7 and two Baeyer-Villiger oxidations. The oxidative modification at C17, C18 and the C6-C7 epoxidation are likely to be catalyzed by the two cytochrome P450 oxygenases ccsD and ccsG. CcsD may be responsible for the epoxidation of the C6-C7 double bond. CcsG may be responsible for the successive oxidative modifications at C17 and C18. The double Baeyer-Villiger oxidations of ketocytochalasin to precytochalasin and cytochalasin Z(16) are among the final steps leading to cytochalasin E and K and are catalyzed by ccsB. The first oxygen insertion step follows that of the classic BVMO mechanism, generating the ester precytochalasin. Release of precytochalasin into an aqueous environment can generate the shunt product iso-precytochalasin through spontaneous isomerization. Alternatively, precytochalasin can undergo further oxidation by ccsB to yield the in-line carbonate-containing cytochalasin Z(16). Cytochalasin Z(16) is a precursor to cytochalasin E and cytochalasin K, whereas iso-precytochalasin is a precursor to cytochalasin Z(17) and rosellichalasin. The hydrolyase ccsE may catalyze hydrolysis of epoxide bond in cytochalasin E to afford cytochalasin K. The function of ccsF has not been assigned but it may play a role in post-PKS-NRPS biosynthetic step, resistance or transport of cytochalasins and related PKS-NRPS products. This chain is Hydrolyase ccsE, found in Aspergillus clavatus (strain ATCC 1007 / CBS 513.65 / DSM 816 / NCTC 3887 / NRRL 1 / QM 1276 / 107).